A 380-amino-acid chain; its full sequence is Cytochrome b (380 aa).

4 consecutive transmembrane segments (helical) span residues 34 to 54, 78 to 99, 114 to 134, and 179 to 199; these read FGSL…LLAT, WLIR…YLHI, WNTG…GYVL, and FFAL…IHLT. Positions 84 and 98 each coordinate heme b. Heme b contacts are provided by His-183 and His-197. Position 202 (His-202) interacts with a ubiquinone. The next 4 membrane-spanning stretches (helical) occupy residues 227 to 247, 289 to 309, 321 to 341, and 348 to 368; these read LKDI…ALFS, LGGV…PLLH, LSQL…WVGS, and FIII…LLFP.

Belongs to the cytochrome b family. As to quaternary structure, the cytochrome bc1 complex contains 11 subunits: 3 respiratory subunits (MT-CYB, CYC1 and UQCRFS1), 2 core proteins (UQCRC1 and UQCRC2) and 6 low-molecular weight proteins (UQCRH/QCR6, UQCRB/QCR7, UQCRQ/QCR8, UQCR10/QCR9, UQCR11/QCR10 and a cleavage product of UQCRFS1). This cytochrome bc1 complex then forms a dimer. It depends on heme b as a cofactor.

Its subcellular location is the mitochondrion inner membrane. Its function is as follows. Component of the ubiquinol-cytochrome c reductase complex (complex III or cytochrome b-c1 complex) that is part of the mitochondrial respiratory chain. The b-c1 complex mediates electron transfer from ubiquinol to cytochrome c. Contributes to the generation of a proton gradient across the mitochondrial membrane that is then used for ATP synthesis. This is Cytochrome b (MT-CYB) from Uria aalge (Common mure).